The sequence spans 334 residues: Geranylgeranyl pyrophosphate synthase idtG (334 aa).

Isopentenyl diphosphate-binding residues include Lys49, Arg52, and His81. Mg(2+)-binding residues include Asp88 and Asp92. Dimethylallyl diphosphate is bound at residue Arg97. Arg98 is a binding site for isopentenyl diphosphate. The dimethylallyl diphosphate site is built by Lys175, Thr176, and Gln209. Asp212 is a Mg(2+) binding site. Residues Asn216, Lys226, and Lys236 each contribute to the dimethylallyl diphosphate site.

The protein belongs to the FPP/GGPP synthase family. Mg(2+) is required as a cofactor.

It carries out the reaction isopentenyl diphosphate + dimethylallyl diphosphate = (2E)-geranyl diphosphate + diphosphate. The enzyme catalyses isopentenyl diphosphate + (2E)-geranyl diphosphate = (2E,6E)-farnesyl diphosphate + diphosphate. It catalyses the reaction isopentenyl diphosphate + (2E,6E)-farnesyl diphosphate = (2E,6E,10E)-geranylgeranyl diphosphate + diphosphate. The protein operates within secondary metabolite biosynthesis. In terms of biological role, geranylgeranyl pyrophosphate synthase; part of the gene cluster that mediates the biosynthesis of paspalitrems, indole-diterpene (IDT) mycotoxins that are potent tremorgens in mammals. The geranylgeranyl diphosphate (GGPP) synthase idtG is proposed to catalyze the first step in IDT biosynthesis via catalysis of a series of iterative condensations of isopentenyl diphosphate (IPP) with dimethylallyl diphosphate (DMAPP), geranyl diphosphate (GPP), and farnesyl diphosphate (FPP), to form GGPP. Condensation of indole-3-glycerol phosphate with GGPP by the prenyltransferase idtC then forms 3-geranylgeranylindole (3-GGI). Epoxidation of the two terminal alkenes of the geranylgeranyl moiety by the FAD-dependent monooxygenase idtM, and cyclization by the terpene cyclase idtB then leads to the production of paspaline. The cytochrome P450 monooxygenase idtP then catalyzes oxidative elimination of the pendant methyl group at C-12 of paspaline and generates the C-10 ketone to yield 13-desoxypaxilline. The cytochrome P450 monooxygenase idtQ may catalyze the C-13 oxidation of 13-desoxypaxilline to afford paxilline. Considering that both paspalicine and paxilline were detected in C.paspali, idtQ also catalyzes the formation of paspalinine from 13-desoxypaxilline via paspalicine as an intermediate. Finally, the alpha-prenyltransferase idtF prenylates paspalinine at the C-20 or the C-21 positions to yield paspalitrems A and C, respectively. The hydroxylation of paspalitrem A at C-32 by a still unknown oxidase affords paspalitrem B. This chain is Geranylgeranyl pyrophosphate synthase idtG, found in Claviceps paspali (Rye ergot fungus).